Reading from the N-terminus, the 176-residue chain is Japanin (176 aa).

The signal sequence occupies residues 1–24 (MKVLRCLVCSFYIIVSLITTMTIG). Glu-47 is a cholesterol binding site. 2 disulfides stabilise this stretch: Cys-52–Cys-174 and Cys-138–Cys-162. Residues Asn-59 and Asn-155 are each glycosylated (N-linked (GlcNAc...) asparagine).

This sequence belongs to the calycin superfamily. Lipocalin family. In terms of assembly, homodimer; non-disulfide-linked. Each monomer accommodates one molecule of cholesterol in a pocket. Expressed in salivary glands.

The protein localises to the secreted. Its function is as follows. Salivary tick protein that modulates host immune response. This protein blocks dendritic cell (DC) differentiation from monocytes. In addition, it inhibits up-regulation of costimulatory molecules and pro-inflammatory cytokines in response to stimuli and promotes up-regulation of co-inhibitory molecules and the anti-inflammatory cytokine interleukin-10. It has a pocket to accomodate cholesterol, which may have immune-modulatory roles, either directly or through interactions with the host gut microbiota. The sequence is that of Japanin from Rhipicephalus appendiculatus (Brown ear tick).